A 495-amino-acid polypeptide reads, in one-letter code: Glycogen synthase (495 aa).

ADP-alpha-D-glucose is bound at residue Lys-24.

This sequence belongs to the glycosyltransferase 1 family. Bacterial/plant glycogen synthase subfamily.

The enzyme catalyses [(1-&gt;4)-alpha-D-glucosyl](n) + ADP-alpha-D-glucose = [(1-&gt;4)-alpha-D-glucosyl](n+1) + ADP + H(+). Its pathway is glycan biosynthesis; glycogen biosynthesis. Its function is as follows. Synthesizes alpha-1,4-glucan chains using ADP-glucose. The protein is Glycogen synthase of Nitrosomonas europaea (strain ATCC 19718 / CIP 103999 / KCTC 2705 / NBRC 14298).